A 461-amino-acid polypeptide reads, in one-letter code: MEDLYRKLPSVDEILREEKINEVLKFNKREVVKNCIREVLERYREKIRRGEVKKIDIEKILEDVVSQIEEKKKMSLRRVVNGTGIILHTNLGRALFPPQVKEHLLDIAFCYSTLEYDVEKGERGSRYSHVEKLLCELLDVEAALVVNNNAAAVLLALNTLAKGKEVIVSRGQLIEIGGSFRIPDVMLQSGAILKEVGTTNKTYDFDYINAITENTALLLKVHTSNYRIVGFTHDIATEELVQIGRKYDIPTMEDLGSGVMVDLREYGLPHEPTVQEVVKAGVDIVTFSGDKLLGGPQAGIIVGKKKYIDLMKKNPLTRALRVDKLCLVSLECVLRIYRDSNPVEAIPTLKMLTAKPSQLYEKAAILNKLVLTIPKVKSKVVEITSLSGGGSLPEESLPSYGITLEVEGFDTEDLERRLRIRDIPIITRIVDGVVTIDVRTLLEGDEEVILHALEEITGVCQ.

K291 is modified (N6-(pyridoxal phosphate)lysine).

It belongs to the SelA family. The cofactor is pyridoxal 5'-phosphate.

It is found in the cytoplasm. The enzyme catalyses L-seryl-tRNA(Sec) + selenophosphate + H(+) = L-selenocysteinyl-tRNA(Sec) + phosphate. Its pathway is aminoacyl-tRNA biosynthesis; selenocysteinyl-tRNA(Sec) biosynthesis; selenocysteinyl-tRNA(Sec) from L-seryl-tRNA(Sec) (bacterial route): step 1/1. Functionally, converts seryl-tRNA(Sec) to selenocysteinyl-tRNA(Sec) required for selenoprotein biosynthesis. This is L-seryl-tRNA(Sec) selenium transferase from Caldanaerobacter subterraneus subsp. tengcongensis (strain DSM 15242 / JCM 11007 / NBRC 100824 / MB4) (Thermoanaerobacter tengcongensis).